The chain runs to 83 residues: Small ribosomal subunit protein eS21 (83 aa).

Belongs to the eukaryotic ribosomal protein eS21 family. Component of the 40S small ribosomal subunit.

It is found in the cytoplasm. The protein resides in the cytosol. The protein localises to the rough endoplasmic reticulum. Its function is as follows. Component of the small ribosomal subunit. The ribosome is a large ribonucleoprotein complex responsible for the synthesis of proteins in the cell. This chain is Small ribosomal subunit protein eS21 (rps21), found in Xenopus tropicalis (Western clawed frog).